The chain runs to 354 residues: Falstatin (354 aa).

Positions 1-21 are cleaved as a signal peptide; sequence MKSITFFVFNICSILALLSHC. Positions 226 to 236 match the BC loop; binds and inhibits the active site cavity of cysteine proteases motif; sequence LEGNAGTGYLW. Residues 274 to 317 are disordered; that stretch reads KYKIDEHDSSKNVNREIESPEQKESDSKPKKPQMQLLGGPDRMR. Positions 275-302 are enriched in basic and acidic residues; it reads YKIDEHDSSKNVNREIESPEQKESDSKP.

The protein belongs to the protease inhibitor I71 family. As to quaternary structure, oligomer; probably composed of 10 monomers. During the liver stage, proteolytically cleaved.

The protein resides in the secreted. It localises to the cytoplasmic vesicle. It is found in the secretory vesicle. The protein localises to the microneme. Its subcellular location is the host cytoplasm. The protein resides in the parasitophorous vacuole lumen. In terms of biological role, cysteine protease inhibitor. Required for the invasion of host erythrocytes by merozoites. In the mosquito vector, essential for the gliding motility of hemocoel sporozoites and, therefore, for salivary gland invasion and the subsequent transmission from the mosquito to the mammalian host. Required for the invasion of host hepatocytes. During the liver stage, may prevent host hepatocyte cell death likely by inhibiting host cysteine proteases. The chain is Falstatin from Plasmodium berghei (strain Anka).